A 94-amino-acid polypeptide reads, in one-letter code: Large ribosomal subunit protein bL25 (94 aa).

The protein belongs to the bacterial ribosomal protein bL25 family. In terms of assembly, part of the 50S ribosomal subunit; part of the 5S rRNA/L5/L18/L25 subcomplex. Contacts the 5S rRNA. Binds to the 5S rRNA independently of L5 and L18.

Functionally, this is one of the proteins that binds to the 5S RNA in the ribosome where it forms part of the central protuberance. This Enterobacter sp. (strain 638) protein is Large ribosomal subunit protein bL25.